A 265-amino-acid chain; its full sequence is Mlc titration factor A (265 aa).

Residues His111, His148, His152, and Glu211 each contribute to the Zn(2+) site.

It belongs to the MtfA family. As to quaternary structure, interacts with Mlc. Zn(2+) serves as cofactor.

It localises to the cytoplasm. Involved in the modulation of the activity of the glucose-phosphotransferase system (glucose-PTS). Interacts with the transcriptional repressor Mlc, preventing its interaction with DNA and leading to the modulation of expression of genes regulated by Mlc, including ptsG, which encodes the PTS system glucose-specific EIICB component. Its function is as follows. Shows zinc-dependent metallopeptidase activity. The sequence is that of Mlc titration factor A from Salmonella schwarzengrund (strain CVM19633).